The primary structure comprises 98 residues: uncharacterized protein (98 aa).

This sequence belongs to the CFAP97 family.

This is an uncharacterized protein from Homo sapiens (Human).